A 193-amino-acid polypeptide reads, in one-letter code: Secreted RxLR effector protein 126 (193 aa).

The signal sequence occupies residues 1–20 (MRYLLAVLIAAAFVISSGTS). The RxLR-dEER motif lies at 50–64 (RMLQTKAVNGLEEER).

Belongs to the RxLR effector family.

Its subcellular location is the secreted. It localises to the host membrane. Its function is as follows. Secreted effector that completely suppresses the host cell death induced by cell death-inducing proteins. The chain is Secreted RxLR effector protein 126 from Plasmopara viticola (Downy mildew of grapevine).